The chain runs to 179 residues: Large ribosomal subunit protein uL5 (179 aa).

Belongs to the universal ribosomal protein uL5 family. Part of the 50S ribosomal subunit; part of the 5S rRNA/L5/L18/L25 subcomplex. Contacts the 5S rRNA and the P site tRNA. Forms a bridge to the 30S subunit in the 70S ribosome.

This is one of the proteins that bind and probably mediate the attachment of the 5S RNA into the large ribosomal subunit, where it forms part of the central protuberance. In the 70S ribosome it contacts protein S13 of the 30S subunit (bridge B1b), connecting the 2 subunits; this bridge is implicated in subunit movement. Contacts the P site tRNA; the 5S rRNA and some of its associated proteins might help stabilize positioning of ribosome-bound tRNAs. In Thiobacillus denitrificans (strain ATCC 25259 / T1), this protein is Large ribosomal subunit protein uL5.